The following is a 172-amino-acid chain: Small ribosomal subunit protein uS5 (172 aa).

One can recognise an S5 DRBM domain in the interval 17 to 80 (FTEKLIKLNR…ERAKRSMVLF (64 aa)).

The protein belongs to the universal ribosomal protein uS5 family. In terms of assembly, part of the 30S ribosomal subunit. Contacts proteins S4 and S8.

Functionally, with S4 and S12 plays an important role in translational accuracy. In terms of biological role, located at the back of the 30S subunit body where it stabilizes the conformation of the head with respect to the body. In Treponema pallidum (strain Nichols), this protein is Small ribosomal subunit protein uS5.